Consider the following 356-residue polypeptide: S-adenosylmethionine:tRNA ribosyltransferase-isomerase (356 aa).

The protein belongs to the QueA family. In terms of assembly, monomer.

Its subcellular location is the cytoplasm. The catalysed reaction is 7-aminomethyl-7-carbaguanosine(34) in tRNA + S-adenosyl-L-methionine = epoxyqueuosine(34) in tRNA + adenine + L-methionine + 2 H(+). The protein operates within tRNA modification; tRNA-queuosine biosynthesis. In terms of biological role, transfers and isomerizes the ribose moiety from AdoMet to the 7-aminomethyl group of 7-deazaguanine (preQ1-tRNA) to give epoxyqueuosine (oQ-tRNA). The sequence is that of S-adenosylmethionine:tRNA ribosyltransferase-isomerase from Serratia proteamaculans (strain 568).